A 460-amino-acid polypeptide reads, in one-letter code: MEKWWFNSMLFNKKLEYRCGLSKSIDSFGPIEKKSEEPSIVTDNDSYSHVDYLVDVSNRQNFLSDKTFLVRDRNSYSYSIFFAIENKILEIDYDSQFNWKNIINSCIENYLRSQICIDSDILDNSFKYNDNDSDVYSYICGKVTNSSQSTSTDVITITNDSEKESFNDDDDFTQKYKHLWVQCESCYGLNYKKFFKSKMNICEHCGDHLKMSSSDRIELLIDPGTWNPRDEDMVSLDPIEFDPIELDPIELDPIELDSEDEPYKTRLDSYQKRTGLSEAVQTGTGQINGIPVAIGIMDFQFMGGSMGSVVGEKITRLIEYATNQLLPLIIVCASGGARMQEGSLSLMQMAKISSALYNYQINQKLFYVAILTSPTTGGVTASFGMLGDIIIAEPNAYIAFAGKRVIEQTLNTEVPEGSQSAEFLFEKGLFDSIVPRNLLKEVLGELFQFHGFFPLTQNGN.

The CoA carboxyltransferase N-terminal domain maps to 179-460 (LWVQCESCYG…GFFPLTQNGN (282 aa)). The Zn(2+) site is built by cysteine 183, cysteine 186, cysteine 202, and cysteine 205. A C4-type zinc finger spans residues 183-205 (CESCYGLNYKKFFKSKMNICEHC).

It belongs to the AccD/PCCB family. In terms of assembly, acetyl-CoA carboxylase is a heterohexamer composed of biotin carboxyl carrier protein, biotin carboxylase and 2 subunits each of ACCase subunit alpha and ACCase plastid-coded subunit beta (accD). Zn(2+) serves as cofactor.

Its subcellular location is the plastid. The protein resides in the chloroplast stroma. It carries out the reaction N(6)-carboxybiotinyl-L-lysyl-[protein] + acetyl-CoA = N(6)-biotinyl-L-lysyl-[protein] + malonyl-CoA. The protein operates within lipid metabolism; malonyl-CoA biosynthesis; malonyl-CoA from acetyl-CoA: step 1/1. Functionally, component of the acetyl coenzyme A carboxylase (ACC) complex. Biotin carboxylase (BC) catalyzes the carboxylation of biotin on its carrier protein (BCCP) and then the CO(2) group is transferred by the transcarboxylase to acetyl-CoA to form malonyl-CoA. The sequence is that of Acetyl-coenzyme A carboxylase carboxyl transferase subunit beta, chloroplastic from Cicer arietinum (Chickpea).